The following is a 118-amino-acid chain: Co-chaperonin GroES (118 aa).

Belongs to the GroES chaperonin family. Heptamer of 7 subunits arranged in a ring. Interacts with the chaperonin GroEL.

The protein localises to the cytoplasm. Its function is as follows. Together with the chaperonin GroEL, plays an essential role in assisting protein folding. The GroEL-GroES system forms a nano-cage that allows encapsulation of the non-native substrate proteins and provides a physical environment optimized to promote and accelerate protein folding. GroES binds to the apical surface of the GroEL ring, thereby capping the opening of the GroEL channel. The protein is Co-chaperonin GroES of Helicobacter pylori (strain HPAG1).